Here is a 148-residue protein sequence, read N- to C-terminus: Lysozyme-like protein 1 (148 aa).

Positions 1–19 are cleaved as a signal peptide; it reads MKSVGVFALIISFSIVAES. In terms of domain architecture, C-type lysozyme spans 20 to 148; it reads KIYTRCKLAK…SEWKRGCEVS (129 aa). Disulfide bonds link Cys25/Cys145, Cys49/Cys133, Cys83/Cys98, and Cys94/Cys112. The active site involves Glu54. The N-linked (GlcNAc...) asparagine glycan is linked to Asn58. Residue Asp71 is part of the active site.

The protein belongs to the glycosyl hydrolase 22 family. As to quaternary structure, monomer.

It localises to the secreted. It catalyses the reaction Hydrolysis of (1-&gt;4)-beta-linkages between N-acetylmuramic acid and N-acetyl-D-glucosamine residues in a peptidoglycan and between N-acetyl-D-glucosamine residues in chitodextrins.. In Mus musculus (Mouse), this protein is Lysozyme-like protein 1 (Lyzl1).